A 623-amino-acid polypeptide reads, in one-letter code: Bifunctional dihydrofolate reductase-thymidylate synthase (623 aa).

In terms of domain architecture, DHFR spans 9–237 (DIYAICACCK…TTLDFLVYSK (229 aa)). A substrate-binding site is contributed by 13-14 (IC). NADP(+) is bound by residues A15 and 38–44 (GLGNKGT). D53 lines the substrate pocket. 3 tandem repeats follow at residues 88–91 (GGDN), 94–97 (GGDN), and 100–103 (GGDN). Residues 88-103 (GGDNTSGGDNTHGGDN) are 3 X 4 AA repeats of G-G-D-N. NADP(+) is bound by residues 115–117 (RSS), 137–139 (SKT), and D153. Substrate is bound by residues I173, Y179, and T194. 174–181 (GGAQVYRE) provides a ligand contact to NADP(+). Positions 263-309 (TAMRRNVAPRTAAPPMGPHSRANGERAPPRARARRTTPRQRKTTSCT) are disordered. The segment covering 291–304 (PRARARRTTPRQRK) has biased composition (basic residues). The tract at residues 337–623 (QHPEYQYLGI…HDKITMEMAA (287 aa)) is thymidylate synthase. Residue R360 coordinates dUMP. Residue C505 is part of the active site. DUMP-binding positions include H506, 524–528 (QRSCD), N536, and 566–568 (HVY).

In the N-terminal section; belongs to the dihydrofolate reductase family. The protein in the C-terminal section; belongs to the thymidylate synthase family. Homodimer.

The enzyme catalyses (6S)-5,6,7,8-tetrahydrofolate + NADP(+) = 7,8-dihydrofolate + NADPH + H(+). The catalysed reaction is dUMP + (6R)-5,10-methylene-5,6,7,8-tetrahydrofolate = 7,8-dihydrofolate + dTMP. Its pathway is cofactor biosynthesis; tetrahydrofolate biosynthesis; 5,6,7,8-tetrahydrofolate from 7,8-dihydrofolate: step 1/1. Its function is as follows. Bifunctional enzyme. Involved in de novo dTMP biosynthesis. Key enzyme in folate metabolism. Catalyzes an essential reaction for de novo glycine and purine synthesis, DNA precursor synthesis, and for the conversion of dUMP to dTMP. In Plasmodium vivax, this protein is Bifunctional dihydrofolate reductase-thymidylate synthase.